Here is a 561-residue protein sequence, read N- to C-terminus: Lysine--tRNA ligase (561 aa).

Residues Glu409 and Glu416 each contribute to the Mg(2+) site.

It belongs to the class-II aminoacyl-tRNA synthetase family. As to quaternary structure, homodimer. It depends on Mg(2+) as a cofactor.

Its subcellular location is the cytoplasm. It catalyses the reaction tRNA(Lys) + L-lysine + ATP = L-lysyl-tRNA(Lys) + AMP + diphosphate. The polypeptide is Lysine--tRNA ligase (Nostoc punctiforme (strain ATCC 29133 / PCC 73102)).